The following is an 85-amino-acid chain: Phosphocarrier protein HPr (85 aa).

Residues 1–85 (MFQQEVTITA…HLVKLMAELE (85 aa)) form the HPr domain. H15 serves as the catalytic Pros-phosphohistidine intermediate.

It belongs to the HPr family.

It localises to the cytoplasm. Its function is as follows. General (non sugar-specific) component of the phosphoenolpyruvate-dependent sugar phosphotransferase system (sugar PTS). This major carbohydrate active-transport system catalyzes the phosphorylation of incoming sugar substrates concomitantly with their translocation across the cell membrane. The phosphoryl group from phosphoenolpyruvate (PEP) is transferred to the phosphoryl carrier protein HPr by enzyme I. Phospho-HPr then transfers it to the PTS EIIA domain. In Escherichia coli O157:H7, this protein is Phosphocarrier protein HPr (ptsH).